The sequence spans 313 residues: Platelet glycoprotein VI (313 aa).

A signal peptide spans 1-21 (MSPASPTFFCIGLCVLQVIQT). The Extracellular portion of the chain corresponds to 22-265 (QSGPLPKPSL…FGFAHQHYAK (244 aa)). 2 Ig-like C2-type domains span residues 27–105 (PKPS…DQLE) and 115–197 (PSLS…APSD). C49 and C89 are oxidised to a cystine. N93 is a glycosylation site (N-linked (GlcNAc...) asparagine). Residues C135 and C181 are joined by a disulfide bond. The disordered stretch occupies residues 213 to 236 (VPTEESFPVTESSRRPSILPTNKI). An N-linked (GlcNAc...) asparagine glycan is attached at N244. The helical transmembrane segment at 266 to 286 (GNLVRICLGATIIIILLGLLA) threads the bilayer. Over 287–313 (EDWHSRKKCLQHRMRALQRPLPPLPLA) the chain is Cytoplasmic.

Associated with Fc receptor gamma chain. The GPVI:FcRgamma complex is associated with the Src kinase family FYN and LYN. Interacts with TRAF4. Interacts with COL1A1, but not with COL4A4. As to expression, megakaryocytes and platelets.

It localises to the cell membrane. Collagen receptor involved in collagen-induced platelet adhesion and activation. Plays a key role in platelet procoagulant activity and subsequent thrombin and fibrin formation. This procoagulant function may contribute to arterial and venous thrombus formation. The signaling pathway involves the FcR gamma-chain, the Src kinases (likely FYN or LYN) and SYK, the adapter protein LAT and leads to the activation of PLCG2. In Mus musculus (Mouse), this protein is Platelet glycoprotein VI.